Consider the following 407-residue polypeptide: Acetate kinase (407 aa).

N10 provides a ligand contact to Mg(2+). K17 lines the ATP pocket. Residue R93 participates in substrate binding. Residue D150 is the Proton donor/acceptor of the active site. ATP-binding positions include 210 to 214, 284 to 286, and 332 to 336; these read HLGNG, DMR, and GVGEN. Mg(2+) is bound at residue E386.

The protein belongs to the acetokinase family. In terms of assembly, homodimer. The cofactor is Mg(2+). Requires Mn(2+) as cofactor.

The protein localises to the cytoplasm. It carries out the reaction acetate + ATP = acetyl phosphate + ADP. Its pathway is metabolic intermediate biosynthesis; acetyl-CoA biosynthesis; acetyl-CoA from acetate: step 1/2. Its function is as follows. Catalyzes the formation of acetyl phosphate from acetate and ATP. Can also catalyze the reverse reaction. In Streptomyces coelicolor (strain ATCC BAA-471 / A3(2) / M145), this protein is Acetate kinase.